Consider the following 542-residue polypeptide: Protein OS-9 homolog (542 aa).

A signal peptide spans 1-21 (MQAKIIYALSAISALIPLGSS). Residues asparagine 52 and asparagine 74 are each glycosylated (N-linked (GlcNAc...) asparagine). 4 disulfide bridges follow: cysteine 70–cysteine 258, cysteine 117–cysteine 130, cysteine 193–cysteine 227, and cysteine 208–cysteine 239. Residues 115 to 241 (ERCIFYQAGF…QVTIPELCNL (127 aa)) enclose the MRH domain. A mannooligosaccharide derivative is bound by residues tryptophan 125, glutamine 137, aspartate 194, arginine 200, glutamate 223, and tyrosine 229. An N-linked (GlcNAc...) asparagine glycan is attached at asparagine 380. The disordered stretch occupies residues 497 to 528 (NARMDDDESTSHTTRDIGEAGSQTTGNTESEV). Residues 505-514 (STSHTTRDIG) are compositionally biased toward basic and acidic residues. A compositionally biased stretch (polar residues) spans 517-528 (GSQTTGNTESEV). The Prevents secretion from ER motif lies at 539-542 (HDEL).

The protein belongs to the OS-9 family. In terms of assembly, homodimer. Component of the HRD1 ubiquitin ligase complex which contains the E3 ligase HRD1, its cofactors HRD3, USA1 and DER1, substrate recruiting factor YOS9 and CDC48-binding protein UBX2. Within the complex, interacts (via N-terminus) with HRD3. In ERAD-L, HRD3 and YOS9 jointly bind misfolded glycoproteins in the endoplasmic reticulum (ER) lumen. Movement of ERAD-L substrates through the ER membrane is facilitated by HRD1 and DER1 which have lateral gates facing each other and which distort the membrane region between the lateral gates, making it much thinner than a normal phospholipid bilayer. Substrates insert into the membrane as a hairpin loop with one strand interacting with DER1 and the other with HRD1. The HRD1 complex interacts with the heterotrimeric CDC48-NPL4-UFD1 ATPase complex which is recruited by UBX2 via its interaction with CDC48 and which moves ubiquitinated substrates to the cytosol for targeting to the proteasome. Interacts with KAR2 and EMP47. Interacts with misfolded ER lumenal proteins like PCR1. Interacts with the GPI-anchored proteins GAS1 and MKC7.

It is found in the endoplasmic reticulum membrane. Lectin involved in the quality control of the secretory pathway. As a member of the endoplasmic reticulum-associated degradation lumenal (ERAD-L) surveillance system, targets misfolded endoplasmic reticulum lumenal glycoproteins for degradation. The recognition of targets is N-glycan specific. Functions in recruiting misfolded protein substrates in conjunction with HRD3. This is Protein OS-9 homolog (YOS9) from Saccharomyces cerevisiae (strain ATCC 204508 / S288c) (Baker's yeast).